Reading from the N-terminus, the 611-residue chain is Actin-related protein 5 (611 aa).

Coiled coils occupy residues 290–329 and 355–386; these read TLTS…LDRL and SAEE…NIEV.

It belongs to the actin family. ARP5 subfamily. In terms of assembly, component of the chromatin remodeling INO80 complex.

The protein localises to the nucleus. Proposed core component of the chromatin remodeling INO80 complex which is involved in transcriptional regulation, DNA replication and probably DNA repair. The sequence is that of Actin-related protein 5 (ACTR5) from Gallus gallus (Chicken).